The following is a 339-amino-acid chain: D-erythrose-4-phosphate dehydrogenase (339 aa).

Residue 11–12 (RI) coordinates NAD(+). Residues 158–160 (SCT), R204, 217–218 (TK), and R240 contribute to the substrate site. C159 serves as the catalytic Nucleophile. N322 contacts NAD(+).

This sequence belongs to the glyceraldehyde-3-phosphate dehydrogenase family. Epd subfamily. In terms of assembly, homotetramer.

It localises to the cytoplasm. It carries out the reaction D-erythrose 4-phosphate + NAD(+) + H2O = 4-phospho-D-erythronate + NADH + 2 H(+). It functions in the pathway cofactor biosynthesis; pyridoxine 5'-phosphate biosynthesis; pyridoxine 5'-phosphate from D-erythrose 4-phosphate: step 1/5. Its function is as follows. Catalyzes the NAD-dependent conversion of D-erythrose 4-phosphate to 4-phosphoerythronate. This Aliivibrio salmonicida (strain LFI1238) (Vibrio salmonicida (strain LFI1238)) protein is D-erythrose-4-phosphate dehydrogenase.